Here is a 250-residue protein sequence, read N- to C-terminus: tRNA (guanine-N(1)-)-methyltransferase (250 aa).

Residues G116 and I136–L141 each bind S-adenosyl-L-methionine.

It belongs to the RNA methyltransferase TrmD family. Homodimer.

The protein resides in the cytoplasm. It carries out the reaction guanosine(37) in tRNA + S-adenosyl-L-methionine = N(1)-methylguanosine(37) in tRNA + S-adenosyl-L-homocysteine + H(+). Functionally, specifically methylates guanosine-37 in various tRNAs. This Pseudomonas putida (strain W619) protein is tRNA (guanine-N(1)-)-methyltransferase.